The sequence spans 370 residues: Small ribosomal subunit biogenesis GTPase RsgA (370 aa).

Residues 111 to 270 (RSEGQILAAN…LIDTPGLRGV (160 aa)) enclose the CP-type G domain. GTP contacts are provided by residues 158–161 (TKAD) and 212–220 (GQSGAGKST). Zn(2+) contacts are provided by cysteine 293, cysteine 298, histidine 300, and cysteine 306.

This sequence belongs to the TRAFAC class YlqF/YawG GTPase family. RsgA subfamily. In terms of assembly, monomer. Associates with 30S ribosomal subunit, binds 16S rRNA. It depends on Zn(2+) as a cofactor.

The protein resides in the cytoplasm. Functionally, one of several proteins that assist in the late maturation steps of the functional core of the 30S ribosomal subunit. Helps release RbfA from mature subunits. May play a role in the assembly of ribosomal proteins into the subunit. Circularly permuted GTPase that catalyzes slow GTP hydrolysis, GTPase activity is stimulated by the 30S ribosomal subunit. This is Small ribosomal subunit biogenesis GTPase RsgA from Streptomyces avermitilis (strain ATCC 31267 / DSM 46492 / JCM 5070 / NBRC 14893 / NCIMB 12804 / NRRL 8165 / MA-4680).